A 311-amino-acid chain; its full sequence is MGLSTRDILDMGSLSRKDISLVLDTARSMKEISLRPVKKVPTLRGKTVVSFFYEPSTRTKVSFDVAAKRLSADSISLSVATSSMTKGETLLDTVKNLERMSPDVVVIRHSSAGVPHMLARHVSVPVINAGDGMHAHPSQALLDMMTVQEKKGRIEGLRLAIIGDIARSRVARSNVEGFLKMGASVVLAAPPTMIPVGVETFGADVTHNVDEAIAGADVIMMLRIQKERAAAFLFSTVREYARTYGLTANRLKNAKKDVLIMHPGPVNRGVEIAPEVADGPYSVILDQVENGVAVRMALFYLVMGGQRDAGD.

Carbamoyl phosphate-binding residues include Arg58 and Thr59. Lys86 contributes to the L-aspartate binding site. Residues Arg108, His136, and Gln139 each contribute to the carbamoyl phosphate site. The L-aspartate site is built by Arg169 and Arg223. 2 residues coordinate carbamoyl phosphate: Gly264 and Pro265.

The protein belongs to the aspartate/ornithine carbamoyltransferase superfamily. ATCase family. As to quaternary structure, heterododecamer (2C3:3R2) of six catalytic PyrB chains organized as two trimers (C3), and six regulatory PyrI chains organized as three dimers (R2).

It carries out the reaction carbamoyl phosphate + L-aspartate = N-carbamoyl-L-aspartate + phosphate + H(+). Its pathway is pyrimidine metabolism; UMP biosynthesis via de novo pathway; (S)-dihydroorotate from bicarbonate: step 2/3. Catalyzes the condensation of carbamoyl phosphate and aspartate to form carbamoyl aspartate and inorganic phosphate, the committed step in the de novo pyrimidine nucleotide biosynthesis pathway. This is Aspartate carbamoyltransferase catalytic subunit from Desulfosudis oleivorans (strain DSM 6200 / JCM 39069 / Hxd3) (Desulfococcus oleovorans).